A 207-amino-acid polypeptide reads, in one-letter code: Large ribosomal subunit protein uL4 (207 aa).

Residues 50–76 form a disordered region; that stretch reads AVKNRSAVSGGGRKPWKQKGTGRARQG.

The protein belongs to the universal ribosomal protein uL4 family. Part of the 50S ribosomal subunit.

Its function is as follows. One of the primary rRNA binding proteins, this protein initially binds near the 5'-end of the 23S rRNA. It is important during the early stages of 50S assembly. It makes multiple contacts with different domains of the 23S rRNA in the assembled 50S subunit and ribosome. In terms of biological role, forms part of the polypeptide exit tunnel. This chain is Large ribosomal subunit protein uL4, found in Macrococcus caseolyticus (strain JCSC5402) (Macrococcoides caseolyticum).